We begin with the raw amino-acid sequence, 659 residues long: mRNA export factor ICP27 homolog (659 aa).

The Zn(2+) site is built by C130, H266, C268, and C273. A CHC2-type zinc finger spans residues 130 to 273 (CMMSNGERPP…CEHACNDNAC (144 aa)). Residues 317 to 659 (GSFDDSRSAT…GEDGESDMTL (343 aa)) form a disordered region. Residues 324–336 (SATSGDGSSCSSA) are compositionally biased toward low complexity. The segment covering 354–365 (SDQTDTSNNGTV) has biased composition (polar residues). Over residues 387–397 (SPLDRPNDYHY) the composition is skewed to basic and acidic residues. Residues 413–427 (GSGSSSTEAVSTASA) are compositionally biased toward low complexity. A compositionally biased stretch (basic and acidic residues) spans 483–499 (SPERRSSEERSSSDQRR). The segment covering 503 to 513 (LSRSASATSGG) has biased composition (polar residues). Low complexity predominate over residues 553 to 575 (SRSNTPPSSPSKPDSAPAASASP). Basic and acidic residues predominate over residues 598–610 (ESVRVSERFETGD). 2 stretches are compositionally biased toward acidic residues: residues 617–628 (ETEDESDDEDDQ) and 646–659 (SETDGEDGESDMTL).

Belongs to the HHV-1 ICP27 protein family.

The protein localises to the virion tegument. It is found in the virion. The protein resides in the host nucleus. Its subcellular location is the host cytoplasm. Functionally, immediate early (EI) protein that plays many roles during productive infection including regulation of viral gene expression and nuclear export of intronless viral RNAs. The chain is mRNA export factor ICP27 homolog from Elephantid herpesvirus 1 (isolate Asian elephant/Berlin/Kiba/1998) (EIHV-1).